A 144-amino-acid polypeptide reads, in one-letter code: Urease accessory protein UreE (144 aa).

Belongs to the UreE family.

The protein resides in the cytoplasm. Involved in urease metallocenter assembly. Binds nickel. Probably functions as a nickel donor during metallocenter assembly. This is Urease accessory protein UreE from Thermosynechococcus vestitus (strain NIES-2133 / IAM M-273 / BP-1).